We begin with the raw amino-acid sequence, 496 residues long: NADH-quinone oxidoreductase subunit N (496 aa).

14 consecutive transmembrane segments (helical) span residues 12 to 32, 43 to 63, 79 to 99, 108 to 128, 132 to 152, 166 to 186, 207 to 227, 257 to 277, 280 to 300, 306 to 326, 333 to 353, 383 to 403, 416 to 436, and 464 to 484; these read LNLI…IILI, SLYV…TLGL, VSIV…PLAL, SYPE…FMVA, LILI…LIAL, FTMG…IYAL, GLMI…AFKL, VAAF…GVEW, VVIL…ALVQ, MLAY…ALDT, IFFY…MLWM, AVIM…SIFW, GYVW…YYYL, and AVVG…QPLV.

Belongs to the complex I subunit 2 family. NDH-1 is composed of 14 different subunits. Subunits NuoA, H, J, K, L, M, N constitute the membrane sector of the complex.

The protein localises to the cell inner membrane. The enzyme catalyses a quinone + NADH + 5 H(+)(in) = a quinol + NAD(+) + 4 H(+)(out). In terms of biological role, NDH-1 shuttles electrons from NADH, via FMN and iron-sulfur (Fe-S) centers, to quinones in the respiratory chain. The immediate electron acceptor for the enzyme in this species is believed to be ubiquinone. Couples the redox reaction to proton translocation (for every two electrons transferred, four hydrogen ions are translocated across the cytoplasmic membrane), and thus conserves the redox energy in a proton gradient. This chain is NADH-quinone oxidoreductase subunit N, found in Sulfurovum sp. (strain NBC37-1).